Here is a 529-residue protein sequence, read N- to C-terminus: Autoinducer-2 kinase (529 aa).

This sequence belongs to the FGGY kinase family.

Its subcellular location is the cytoplasm. The enzyme catalyses (S)-4,5-dihydroxypentane-2,3-dione + ATP = (2S)-2-hydroxy-3,4-dioxopentyl phosphate + ADP + H(+). Its function is as follows. Catalyzes the phosphorylation of autoinducer-2 (AI-2) to phospho-AI-2, which subsequently inactivates the transcriptional regulator LsrR and leads to the transcription of the lsr operon. Phosphorylates the ring-open form of (S)-4,5-dihydroxypentane-2,3-dione (DPD), which is the precursor to all AI-2 signaling molecules, at the C5 position. In Yersinia enterocolitica serotype O:8 / biotype 1B (strain NCTC 13174 / 8081), this protein is Autoinducer-2 kinase.